The primary structure comprises 724 residues: Probable metal-nicotianamine transporter YSL8 (724 aa).

The tract at residues 1–58 (MRKGGLTPDRDRQIEEHELQETGISPDIERLKRNINATPYQREEEEEDREEQEESVEG) is disordered. Over residues 8-20 (PDRDRQIEEHELQ) the composition is skewed to basic and acidic residues. A Phosphoserine modification is found at Ser25. Over residues 43-56 (EEEEEDREEQEESV) the composition is skewed to acidic residues. The next 7 helical transmembrane spans lie at 72-92 (LTIRAFVVSFALSILFSFIVM), 96-116 (LTTGIIPSLNVSAGLLGFFFV), 144-164 (CVVASSGIAFSGGFGTYLFAM), 184-204 (LGWMIAFLFVVSFLGLFSVVP), 245-265 (VLGKFFSFSFFWGFFQWFFTA), 304-324 (IINISLLLGGILSWGLMWPLI), and 349-369 (VFIAVATILGDGLYNFCKVLI). The interval 386–407 (RSSLAHKEDPPASPASPLTPRI) is disordered. The next 8 membrane-spanning stretches (helical) occupy residues 423 to 443 (IPSWFAVGGYVVISAVSTAIL), 455 to 475 (IIVIYIFAPILAFCNAYGAGL), 478 to 497 (WSLASTYGKLAIFTIGAWAG), 501 to 520 (GGLLAGLAACGVMMNIVSTA), 541 to 561 (FVSQVIGTAMGCLVSPCVFWL), 603 to 623 (LMLCYVFFGVAILINLIKDCL), 641 to 661 (FFLGPYFAIDMCVGSFILFVW), and 679 to 699 (GLICGDGIWTLPSSVLAIAGV).

Belongs to the YSL (TC 2.A.67.2) family.

It localises to the membrane. In terms of biological role, may be involved in the transport of nicotianamine-chelated metals. This is Probable metal-nicotianamine transporter YSL8 (YSL8) from Arabidopsis thaliana (Mouse-ear cress).